The sequence spans 119 residues: Protein TusC (119 aa).

Belongs to the DsrF/TusC family. Heterohexamer, formed by a dimer of trimers. The hexameric TusBCD complex contains 2 copies each of TusB, TusC and TusD. The TusBCD complex interacts with TusE.

The protein resides in the cytoplasm. Its function is as follows. Part of a sulfur-relay system required for 2-thiolation of 5-methylaminomethyl-2-thiouridine (mnm(5)s(2)U) at tRNA wobble positions. The polypeptide is Protein TusC (Citrobacter koseri (strain ATCC BAA-895 / CDC 4225-83 / SGSC4696)).